The following is a 201-amino-acid chain: Dephospho-CoA kinase (201 aa).

Residues 4–201 form the DPCK domain; that stretch reads AFFVTASIAC…VIQEISKGKM (198 aa). Position 12–17 (12–17) interacts with ATP; that stretch reads ACGKST.

It belongs to the CoaE family.

It localises to the cytoplasm. The enzyme catalyses 3'-dephospho-CoA + ATP = ADP + CoA + H(+). Its pathway is cofactor biosynthesis; coenzyme A biosynthesis; CoA from (R)-pantothenate: step 5/5. Functionally, catalyzes the phosphorylation of the 3'-hydroxyl group of dephosphocoenzyme A to form coenzyme A. The sequence is that of Dephospho-CoA kinase from Campylobacter jejuni (strain RM1221).